The sequence spans 513 residues: MALTLDACTLILKEHHLLKSVALNGDSNLNMTGIAYDSRKVTADTLFFCKGNFRPVFLTNAKEAGAVTYVAEQPIVEGNGMNALIVTNVQKAMAVLSAAFYDYPQDDLFIVAYTGTKGKTTASYFTQSILQDATNKKTALFSTIDRVLGPKPEDRFKSDLTTPESLDLFHDMRQAVENGMTHLVMEVSSQAYKKNRVYGLTFDVGFFLNISPDHVGPNEHPNFEDYLHCKLQLLVNSRHCVINAQTQNFGDVYAAATTTTEPENIYLFADTSYQPAQPVNIDFRFENQAMTLAESRFKVTAVSKKAIQLGVSGDYQLRLIGDFNESNATAAIIGAALGGADLIAAQQGIRRLQIPGRMETLAVEGHGQVYVDYAHNYASMKALLSFLQKEYNQPKLLVVVGSPGDKGVSRRAGFAQVLNEYADRAILTTDDPGYEDPATIAAEILAGIDQDKVDTTVEIDRATAIKQAIEESQPGDIVVLAAKGADAYQKVRGVDTPYPTDMVIAKQVAQQLS.

A UDP-N-acetyl-alpha-D-muramoyl-L-alanyl-D-glutamate-binding site is contributed by Ser38. Residue 115-121 (GTKGKTT) participates in ATP binding. UDP-N-acetyl-alpha-D-muramoyl-L-alanyl-D-glutamate-binding positions include 161–162 (TT), Ser188, and Arg196. Lys230 bears the N6-carboxylysine mark.

The protein belongs to the MurCDEF family. MurE subfamily. Carboxylation is probably crucial for Mg(2+) binding and, consequently, for the gamma-phosphate positioning of ATP.

Its subcellular location is the cytoplasm. Its pathway is cell wall biogenesis; peptidoglycan biosynthesis. In terms of biological role, catalyzes the addition of an amino acid to the nucleotide precursor UDP-N-acetylmuramoyl-L-alanyl-D-glutamate (UMAG) in the biosynthesis of bacterial cell-wall peptidoglycan. This is UDP-N-acetylmuramyl-tripeptide synthetase from Latilactobacillus sakei subsp. sakei (strain 23K) (Lactobacillus sakei subsp. sakei).